Reading from the N-terminus, the 163-residue chain is Nodulin-13 (163 aa).

Residues Q68 and Y82 each coordinate kinetin. 2 residues coordinate N(6)-dimethylallyladenine: Q68 and Y82. The trans-zeatin site is built by Q68, Y82, and Y133.

Belongs to the BetVI family. As to quaternary structure, homodimer. In terms of tissue distribution, expressed in nodules, but not in leaves, stems, flowers and roots. Specifically located in the nodule cortex.

Its function is as follows. May be involved in nodule organogenesis rather in the processes related to nitrogen fixation or interactions with the bacteria. May regulate nodulation by controlling the levels of freely available cytokinins. The sequence is that of Nodulin-13 (N13) from Medicago truncatula (Barrel medic).